The sequence spans 582 residues: Inactive metallocarboxypeptidase ECM14 (582 aa).

Residues methionine 1–alanine 20 form the signal peptide. Residues isoleucine 21–proline 172 constitute a propeptide that is removed on maturation. In terms of domain architecture, Peptidase M14 spans aspartate 200 to leucine 522. Residues histidine 265 and glutamate 268 each contribute to the Zn(2+) site. Substrate is bound by residues histidine 265–glutamate 268, arginine 323, and aspartate 340–arginine 341. The cysteines at positions 334 and 357 are disulfide-linked. N-linked (GlcNAc...) asparagine glycosylation is found at asparagine 381 and asparagine 387. Histidine 397 contacts Zn(2+). Residue serine 398 to tyrosine 399 participates in substrate binding. A compositionally biased stretch (acidic residues) spans serine 561–asparagine 571. Positions serine 561–valine 582 are disordered. The N-linked (GlcNAc...) asparagine glycan is linked to asparagine 571.

It belongs to the peptidase M14 family. Requires Zn(2+) as cofactor.

It is found in the vacuole. The protein resides in the secreted. Functionally, inactive carboxypeptidase that may play a role in cell wall organization and biogenesis. The sequence is that of Inactive metallocarboxypeptidase ECM14 (ECM14) from Coccidioides posadasii (strain RMSCC 757 / Silveira) (Valley fever fungus).